The following is a 276-amino-acid chain: MGIIDVQRSHLTATPSKERDAPAHPPPTILPVCILFPYTSIALPVLMYYIPEKGQFDQNPFLKLIAILPPCLYSAVQFPLLFLGNPESSCTPRPALYATLYLLLDASLLAFSAISILSIAAFTTTEWNSDEVVAVCSTLLPSLLVLPAHLLSTSCALTPGSIGFTDSSVDILIDLLMVSLLAAGLTLNVDESWRFFPYICISSLVLVLAKLLRKSSSMPRRDPAPAPAWRIAAFVLIFGLSMFVYFSILHECLLIFGNHFPWFPSQAPSNDLTNKW.

A disordered region spans residues 1-24 (MGIIDVQRSHLTATPSKERDAPAH).

This sequence belongs to the UPF0328 family.

The chain is UPF0328 protein ECU08_2080 from Encephalitozoon cuniculi (strain GB-M1) (Microsporidian parasite).